Reading from the N-terminus, the 473-residue chain is ATP synthase subunit beta, chloroplastic (473 aa).

172–179 (GGAGVGKT) contacts ATP.

This sequence belongs to the ATPase alpha/beta chains family. In terms of assembly, F-type ATPases have 2 components, CF(1) - the catalytic core - and CF(0) - the membrane proton channel. CF(1) has five subunits: alpha(3), beta(3), gamma(1), delta(1), epsilon(1). CF(0) has four main subunits: a(1), b(1), b'(1) and c(9-12).

Its subcellular location is the plastid. It localises to the chloroplast thylakoid membrane. It catalyses the reaction ATP + H2O + 4 H(+)(in) = ADP + phosphate + 5 H(+)(out). Functionally, produces ATP from ADP in the presence of a proton gradient across the membrane. The catalytic sites are hosted primarily by the beta subunits. This chain is ATP synthase subunit beta, chloroplastic, found in Pteridium esculentum (Bracken fern).